Consider the following 148-residue polypeptide: Hemoglobin subunit beta (148 aa).

The Globin domain maps to 3–148 (XWTDXERAAI…VVSALGRQYH (146 aa)). Heme b contacts are provided by H64 and H93.

This sequence belongs to the globin family. In terms of assembly, heterotetramer of two alpha chains and two beta chains. Red blood cells.

Involved in oxygen transport from gills to the various peripheral tissues. This is Hemoglobin subunit beta (hbb) from Decapterus maruadsi (Japanese scad).